A 343-amino-acid chain; its full sequence is Protease HtpX homolog (343 aa).

2 helical membrane passes run 7–24 (TMLL…GYLV) and 29–46 (GMVV…FSYW). Histidine 130 contacts Zn(2+). Glutamate 131 is a catalytic residue. Histidine 134 is a Zn(2+) binding site. 2 helical membrane passes run 145-165 (LTAT…LMGM) and 177-197 (GAGM…AMLV). Glutamate 206 serves as a coordination point for Zn(2+). Residues 308-343 (NLEDEDLNPEAQNGFTHNQKKKTVRRGKDRPTWLRH) are disordered. Over residues 325-335 (NQKKKTVRRGK) the composition is skewed to basic residues.

This sequence belongs to the peptidase M48B family. Zn(2+) is required as a cofactor.

It localises to the cell inner membrane. In Bartonella bacilliformis (strain ATCC 35685 / KC583 / Herrer 020/F12,63), this protein is Protease HtpX homolog.